A 283-amino-acid polypeptide reads, in one-letter code: Mau operon transcriptional activator (283 aa).

Residues 1 to 58 (MNWDDLRVVAAINRCGSFNRAAKMLNVEETTIARRLARLEGSLGCVLFQAVDGQRRPT) form the HTH lysR-type domain. Positions 18-37 (FNRAAKMLNVEETTIARRLA) form a DNA-binding region, H-T-H motif.

Belongs to the LysR transcriptional regulatory family.

Its function is as follows. Transcriptional activator of the mau genes involved in methylamine metabolism. This Paracoccus denitrificans protein is Mau operon transcriptional activator (mauR).